Reading from the N-terminus, the 229-residue chain is GTP cyclohydrolase 1 (229 aa).

Positions 1 to 31 (MFRESDNTIAPSNQDLNKPVVDKEQPAERTP) are disordered. The segment covering 7–16 (NTIAPSNQDL) has biased composition (polar residues). Residues cysteine 117, histidine 120, and cysteine 188 each contribute to the Zn(2+) site.

This sequence belongs to the GTP cyclohydrolase I family. As to quaternary structure, toroid-shaped homodecamer, composed of two pentamers of five dimers.

The enzyme catalyses GTP + H2O = 7,8-dihydroneopterin 3'-triphosphate + formate + H(+). It participates in cofactor biosynthesis; 7,8-dihydroneopterin triphosphate biosynthesis; 7,8-dihydroneopterin triphosphate from GTP: step 1/1. The protein is GTP cyclohydrolase 1 of Rhodopirellula baltica (strain DSM 10527 / NCIMB 13988 / SH1).